The following is a 565-amino-acid chain: NAD-dependent malic enzyme (565 aa).

Residue Tyr-104 is the Proton donor of the active site. Arg-157 lines the NAD(+) pocket. The Proton acceptor role is filled by Lys-175. A divalent metal cation-binding residues include Glu-246, Asp-247, and Asp-270. Positions 270 and 418 each coordinate NAD(+).

The protein belongs to the malic enzymes family. As to quaternary structure, homotetramer. Mg(2+) is required as a cofactor. It depends on Mn(2+) as a cofactor.

The catalysed reaction is (S)-malate + NAD(+) = pyruvate + CO2 + NADH. It catalyses the reaction oxaloacetate + H(+) = pyruvate + CO2. This is NAD-dependent malic enzyme from Shigella sonnei (strain Ss046).